A 477-amino-acid polypeptide reads, in one-letter code: Cysteine--tRNA ligase (477 aa).

Cysteine 28 lines the Zn(2+) pocket. The 'HIGH' region signature appears at 30–40; the sequence is PTVYDYAHIGN. Residues cysteine 213, histidine 238, and glutamate 242 each contribute to the Zn(2+) site. Residues 270-274 carry the 'KMSKS' region motif; the sequence is KMSKS. An ATP-binding site is contributed by lysine 273.

The protein belongs to the class-I aminoacyl-tRNA synthetase family. In terms of assembly, monomer. It depends on Zn(2+) as a cofactor.

It is found in the cytoplasm. It catalyses the reaction tRNA(Cys) + L-cysteine + ATP = L-cysteinyl-tRNA(Cys) + AMP + diphosphate. The chain is Cysteine--tRNA ligase from Chlamydia trachomatis serovar A (strain ATCC VR-571B / DSM 19440 / HAR-13).